A 1109-amino-acid polypeptide reads, in one-letter code: Protein phosphatase 1 regulatory subunit 3A (1109 aa).

Phosphoserine; by GSK3 occurs at positions 40 and 44. A Phosphoserine; by PKA and ISPK modification is found at Ser48. Ser51 carries the phosphoserine modification. Thr58 is subject to Phosphothreonine. The PP1-binding motif motif lies at 64 to 67; that stretch reads RRVS. Residue Ser67 is modified to Phosphoserine; by PKA. The region spanning 124–232 is the CBM21 domain; sequence QLQVQKAMLE…NNNGTNYTLV (109 aa). Positions 236–251 are enriched in basic and acidic residues; it reads KEPEPEPGKPLEEAPS. Disordered regions lie at residues 236–278, 340–424, 436–455, and 493–517; these read KEPE…NFEN, GKNT…SDGS, DDNA…CSFP, and YFKK…KEKR. Composition is skewed to polar residues over residues 340 to 352, 360 to 384, and 396 to 406; these read GKNT…SNIP, KNQS…SAES, and YSSGNESSHQP. The residue at position 843 (Ser843) is a Phosphoserine. Disordered regions lie at residues 945-985 and 1011-1048; these read SATE…RKEK and SREN…ETQD. The segment covering 951–963 has biased composition (polar residues); it reads YNCSPTRETQGQP. Composition is skewed to basic and acidic residues over residues 966–985 and 1011–1034; these read KPEE…RKEK and SREN…KEFE. Positions 1035–1048 are enriched in polar residues; it reads SSASSSLPVQETQD. Residues 1066-1086 traverse the membrane as a helical segment; that stretch reads FLLFLMFLVTVYHYDLMIGLA.

Interacts with PPP1CC catalytic subunit of PP1, and associates with glycogen. Phosphorylation at Ser-48 by ISPK stimulates the dephosphorylation of glycogen synthase and phosphorylase kinase. Skeletal muscle, diaphragm and cardiac muscle.

The protein localises to the membrane. In terms of biological role, seems to act as a glycogen-targeting subunit for PP1. PP1 is essential for cell division, and participates in the regulation of glycogen metabolism, muscle contractility and protein synthesis. Plays an important role in glycogen synthesis but is not essential for insulin activation of glycogen synthase. The sequence is that of Protein phosphatase 1 regulatory subunit 3A (PPP1R3A) from Oryctolagus cuniculus (Rabbit).